Here is a 533-residue protein sequence, read N- to C-terminus: DEAD-box ATP-dependent RNA helicase CshA (533 aa).

A Q motif motif is present at residues 2-30 (TTFRELGLSDSLLQSVESMGFEEATPIQA). The 171-residue stretch at 33-203 (IPHALQGKDI…ERFMTEPQHI (171 aa)) folds into the Helicase ATP-binding domain. Residue 46 to 53 (AQTGTGKT) participates in ATP binding. The short motif at 151–154 (DEAD) is the DEAD box element. The Helicase C-terminal domain occupies 214 to 374 (NIQQFYLEVQ…RMDAPTLDEA (161 aa)). Positions 428 to 533 (TTPIALTSEP…ERKHHSRPQA (106 aa)) are disordered. Basic and acidic residues predominate over residues 458–512 (DGNRNRSRDGRGGGDGRNRDRNRDGRNRDGNRDRNRDGNRDRNRDGGSRGRRGEG). The span at 524-533 (ERKHHSRPQA) shows a compositional bias: basic residues.

This sequence belongs to the DEAD box helicase family. CshA subfamily. In terms of assembly, oligomerizes, may be a member of the RNA degradosome.

It localises to the cytoplasm. It carries out the reaction ATP + H2O = ADP + phosphate + H(+). Functionally, DEAD-box RNA helicase possibly involved in RNA degradation. May work in conjunction with the cold shock proteins to ensure proper initiation of transcription at low and optimal temperatures. Unwinds dsRNA in both 5'- and 3'-directions and shows RNA-dependent ATPase activity. Probably has a somewhat redundant function with cshB, as cshA can partially complement the growth effects of a cshB deletion. Plays a role in adaptation to cold, oxididant and pH stress. This chain is DEAD-box ATP-dependent RNA helicase CshA, found in Bacillus cereus (strain ATCC 14579 / DSM 31 / CCUG 7414 / JCM 2152 / NBRC 15305 / NCIMB 9373 / NCTC 2599 / NRRL B-3711).